Consider the following 204-residue polypeptide: Cytochrome bo(3) ubiquinol oxidase subunit 3 (204 aa).

The Cytoplasmic portion of the chain corresponds to 1 to 31 (MATDTLTHATAHAHEHGHHDAGGTKIFGFWI). The chain crosses the membrane as a helical span at residues 32–50 (YLMSDCILFSILFATYAVL). At 51-66 (VNGTAGGPTGKDIFEL) the chain is on the periplasmic side. A helical transmembrane segment spans residues 67–85 (PFVLVETFLLLFSSITYGM). Topologically, residues 86-101 (AAIAMYKNNKSQVISW) are cytoplasmic. A helical transmembrane segment spans residues 102–120 (LALTWLFGAGFIGMEIYEF). The Periplasmic segment spans residues 121–142 (HHLIVNGMGPDRSGFLSAFFAL). Residues 143 to 161 (VGTHGLHVTSGLIWMAVLM) form a helical membrane-spanning segment. The Cytoplasmic segment spans residues 162–184 (VQIARRGLTSTNRTRIMCLSLFW). The chain crosses the membrane as a helical span at residues 185 to 203 (HFLDVVWICVFTVVYLMGA). A topological domain (periplasmic) is located at residue Met204.

This sequence belongs to the cytochrome c oxidase subunit 3 family. Heterooctamer of two A chains, two B chains, two C chains and two D chains.

Its subcellular location is the cell inner membrane. Its function is as follows. Cytochrome bo(3) ubiquinol terminal oxidase is the component of the aerobic respiratory chain of E.coli that predominates when cells are grown at high aeration. Has proton pump activity across the membrane in addition to electron transfer, pumping 2 protons/electron. In Escherichia coli O6:H1 (strain CFT073 / ATCC 700928 / UPEC), this protein is Cytochrome bo(3) ubiquinol oxidase subunit 3 (cyoC).